Reading from the N-terminus, the 450-residue chain is 23S rRNA (uracil(1939)-C(5))-methyltransferase RlmD (450 aa).

The tract at residues 1–22 (MARNKGGLRFQPSGGARGPAIP) is disordered. The 59-residue stretch at 20-78 (AIPVGKKQRLTIERLAHDGRGIAHEAGMTWFVSGGLPGEELEARVLGARSKVVDARSER) folds into the TRAM domain. [4Fe-4S] cluster-binding residues include C91, C97, C100, and C179. 6 residues coordinate S-adenosyl-L-methionine: Q283, F312, N317, E333, D360, and D381. C407 acts as the Nucleophile in catalysis.

Belongs to the class I-like SAM-binding methyltransferase superfamily. RNA M5U methyltransferase family. RlmD subfamily.

It carries out the reaction uridine(1939) in 23S rRNA + S-adenosyl-L-methionine = 5-methyluridine(1939) in 23S rRNA + S-adenosyl-L-homocysteine + H(+). Functionally, catalyzes the formation of 5-methyl-uridine at position 1939 (m5U1939) in 23S rRNA. The chain is 23S rRNA (uracil(1939)-C(5))-methyltransferase RlmD from Pseudomonas aeruginosa (strain UCBPP-PA14).